The sequence spans 271 residues: Large ribosomal subunit protein uL2 (271 aa).

Residues 221-271 form a disordered region; that stretch reads RGVAMNPVDHPMGGGEGKSSGGHPRNRNGIPSNGFKTRNKKKITNKYIIKK. Positions 257-271 are enriched in basic residues; the sequence is TRNKKKITNKYIIKK.

This sequence belongs to the universal ribosomal protein uL2 family. In terms of assembly, part of the 50S ribosomal subunit. Forms a bridge to the 30S subunit in the 70S ribosome.

In terms of biological role, one of the primary rRNA binding proteins. Required for association of the 30S and 50S subunits to form the 70S ribosome, for tRNA binding and peptide bond formation. It has been suggested to have peptidyltransferase activity; this is somewhat controversial. Makes several contacts with the 16S rRNA in the 70S ribosome. This chain is Large ribosomal subunit protein uL2, found in Karelsulcia muelleri (strain GWSS) (Sulcia muelleri).